Reading from the N-terminus, the 547-residue chain is Phosphomethylpyrimidine synthase (547 aa).

Substrate is bound by residues Asn-150, Met-179, Tyr-208, His-244, 264–266 (SRG), 305–308 (DGLR), and Glu-344. His-348 contacts Zn(2+). Tyr-371 is a binding site for substrate. A Zn(2+)-binding site is contributed by His-412. [4Fe-4S] cluster is bound by residues Cys-492, Cys-495, and Cys-500.

This sequence belongs to the ThiC family. The cofactor is [4Fe-4S] cluster.

The enzyme catalyses 5-amino-1-(5-phospho-beta-D-ribosyl)imidazole + S-adenosyl-L-methionine = 4-amino-2-methyl-5-(phosphooxymethyl)pyrimidine + CO + 5'-deoxyadenosine + formate + L-methionine + 3 H(+). It participates in cofactor biosynthesis; thiamine diphosphate biosynthesis. Catalyzes the synthesis of the hydroxymethylpyrimidine phosphate (HMP-P) moiety of thiamine from aminoimidazole ribotide (AIR) in a radical S-adenosyl-L-methionine (SAM)-dependent reaction. The polypeptide is Phosphomethylpyrimidine synthase (Nocardia farcinica (strain IFM 10152)).